Reading from the N-terminus, the 121-residue chain is Large ribosomal subunit protein uL18 (121 aa).

Belongs to the universal ribosomal protein uL18 family. In terms of assembly, part of the 50S ribosomal subunit; part of the 5S rRNA/L5/L18/L25 subcomplex. Contacts the 5S and 23S rRNAs.

In terms of biological role, this is one of the proteins that bind and probably mediate the attachment of the 5S RNA into the large ribosomal subunit, where it forms part of the central protuberance. The protein is Large ribosomal subunit protein uL18 of Mesomycoplasma hyopneumoniae (strain 232) (Mycoplasma hyopneumoniae).